A 126-amino-acid chain; its full sequence is Aspartate 1-decarboxylase (126 aa).

The Schiff-base intermediate with substrate; via pyruvic acid role is filled by Ser25. Residue Ser25 is modified to Pyruvic acid (Ser). Thr57 is a binding site for substrate. Catalysis depends on Tyr58, which acts as the Proton donor. Residue 73-75 (GAA) participates in substrate binding.

This sequence belongs to the PanD family. As to quaternary structure, heterooctamer of four alpha and four beta subunits. Requires pyruvate as cofactor. In terms of processing, is synthesized initially as an inactive proenzyme, which is activated by self-cleavage at a specific serine bond to produce a beta-subunit with a hydroxyl group at its C-terminus and an alpha-subunit with a pyruvoyl group at its N-terminus.

It localises to the cytoplasm. The catalysed reaction is L-aspartate + H(+) = beta-alanine + CO2. The protein operates within cofactor biosynthesis; (R)-pantothenate biosynthesis; beta-alanine from L-aspartate: step 1/1. Functionally, catalyzes the pyruvoyl-dependent decarboxylation of aspartate to produce beta-alanine. In Citrobacter koseri (strain ATCC BAA-895 / CDC 4225-83 / SGSC4696), this protein is Aspartate 1-decarboxylase.